Here is a 101-residue protein sequence, read N- to C-terminus: Replication restart protein PriB (101 aa).

Residues 1–101 enclose the SSB domain; that stretch reads MTTNNLVLSG…IHAENVELKT (101 aa).

Belongs to the PriB family. Homodimer. Interacts with PriA and DnaT. Component of the replication restart primosome. Primosome assembly occurs via a 'hand-off' mechanism. PriA binds to replication forks, subsequently PriB then DnaT bind; DnaT then displaces ssDNA to generate the helicase loading substrate.

In terms of biological role, involved in the restart of stalled replication forks, which reloads the replicative helicase on sites other than the origin of replication; the PriA-PriB pathway is the major replication restart pathway. During primosome assembly it facilitates complex formation between PriA and DnaT on DNA; stabilizes PriA on DNA. Stimulates the DNA unwinding activity of PriA helicase. The sequence is that of Replication restart protein PriB from Shewanella baltica (strain OS223).